The sequence spans 261 residues: Thiamine thiazole synthase (261 aa).

NAD(+) is bound by residues Ser-40, 59 to 60, Gly-67, Val-133, and 159 to 161; these read ER and HID. Residues Asp-161 and His-176 each coordinate Fe cation. 2 residues coordinate NAD(+): Ser-179 and Met-226. Arg-236 serves as a coordination point for glycine.

It belongs to the THI4 family. As to quaternary structure, homooctamer; tetramer of dimers. Fe(2+) serves as cofactor.

The catalysed reaction is hydrogen sulfide + glycine + NAD(+) = ADP-5-ethyl-4-methylthiazole-2-carboxylate + nicotinamide + 3 H2O + H(+). The protein operates within cofactor biosynthesis; thiamine diphosphate biosynthesis. In terms of biological role, involved in the biosynthesis of the thiazole moiety of thiamine. Catalyzes the conversion of NAD and glycine to adenosine diphosphate 5-(2-hydroxyethyl)-4-methylthiazole-2-carboxylate (ADT), an adenylated thiazole intermediate, using free sulfide as a source of sulfur. The sequence is that of Thiamine thiazole synthase from Methanococcus maripaludis (strain C5 / ATCC BAA-1333).